We begin with the raw amino-acid sequence, 313 residues long: Homeobox protein CDX-2 (313 aa).

S60 carries the phosphoserine modification. Positions H113–E153 are disordered. A compositionally biased stretch (basic residues) spans A114–H124. The interval K185–K215 is interaction with DNA. The homeobox DNA-binding region spans K185–N244. The interval R227–R241 is interaction with 5-mCpG DNA. Residues K242–Q313 form a disordered region. Low complexity-rich tracts occupy residues Q249–A261 and Q271–L300. Phosphoserine is present on S283. Positions S283–S295 match the 4S motif; modulates transactivation activity and protein stability motif.

It belongs to the Caudal homeobox family. As to quaternary structure, can bind DNA as a monomer or homodimer. In terms of processing, ubiquitinated, leading to its degradation by the proteasome. Phosphorylation at Ser-60 reduces transactivation capacity. Phosphorylation at Ser-283 reduces transactivation capacity and also increases ubiquitin-dependent proteasome degradation. In terms of tissue distribution, expressed in the intestine.

The protein resides in the nucleus. Functionally, transcription factor which regulates the transcription of multiple genes expressed in the intestinal epithelium. Binds to the promoter of the intestinal sucrase-isomaltase SI and activates SI transcription. Binds to the DNA sequence 5'-ATAAAAACTTAT-3' in the promoter region of VDR and activates VDR transcription. Binds to and activates transcription of LPH. Activates transcription of CLDN2 and intestinal mucin MUC2. Binds to the 5'-AATTTTTTACAACACCT-3' DNA sequence in the promoter region of CA1 and activates CA1 transcription. Important in broad range of functions from early differentiation to maintenance of the intestinal epithelial lining of both the small and large intestine. Binds preferentially to methylated DNA. The polypeptide is Homeobox protein CDX-2 (CDX2) (Mesocricetus auratus (Golden hamster)).